The primary structure comprises 473 residues: MKTLYSLRRFYPVETLFNGTLSLAGRDQETTGFAWWAGNARLINLSGKLLGAHVAHAGLIVFWAGAMNLFEVAHFVPEKPMYEQGLILLPHLATLGWGVGPGGEVVDTFPYFVSGVLHLISSAVLGFGGIYHALLGPETLEESFPFFGYVWKDRNKMTTILGIHLILLGIGAFLLVLKALYFGGVYDTWAPGGGDVRKITNLTLSPSVIFGYLLKSPFGGEGWIVSVDDLEDIIGGHVWLGSICILGGIWHILTKPFAWARRAFVWSGEAYLSYSLGALSVFGFIACCFVWFNNTAYPSEFYGPTGPEASQAQAFTFLVRDQRLGANVGSAQGPTGLGKYLMRSPTGEVIFGGETMRFWDLRAPWLEPLRGPNGLDLSRLKKDIQPWQERRSAEYMTHAPLGSLNSVGGVATEINAVNYVSPRSWLATSHFVLGFFLFVGHLWHAGRARAAAAGFEKGIDRDFEPVLSMTPLN.

Positions 1–14 (MKTLYSLRRFYPVE) are excised as a propeptide. The residue at position 15 (threonine 15) is an N-acetylthreonine. A Phosphothreonine modification is found at threonine 15. The next 5 membrane-spanning stretches (helical) occupy residues 69–93 (LFEV…PHLA), 134–155 (LLGP…KDRN), 178–200 (KALY…RKIT), 255–275 (KPFA…LSYS), and 291–312 (WFNN…ASQA). Glutamate 367 lines the [CaMn4O5] cluster pocket. Residues 447-471 (RARAAAAGFEKGIDRDFEPVLSMTP) traverse the membrane as a helical segment.

Belongs to the PsbB/PsbC family. PsbC subfamily. PSII is composed of 1 copy each of membrane proteins PsbA, PsbB, PsbC, PsbD, PsbE, PsbF, PsbH, PsbI, PsbJ, PsbK, PsbL, PsbM, PsbT, PsbX, PsbY, PsbZ, Psb30/Ycf12, at least 3 peripheral proteins of the oxygen-evolving complex and a large number of cofactors. It forms dimeric complexes. Binds multiple chlorophylls and provides some of the ligands for the Ca-4Mn-5O cluster of the oxygen-evolving complex. It may also provide a ligand for a Cl- that is required for oxygen evolution. PSII binds additional chlorophylls, carotenoids and specific lipids. serves as cofactor.

The protein resides in the plastid. It is found in the chloroplast thylakoid membrane. Its function is as follows. One of the components of the core complex of photosystem II (PSII). It binds chlorophyll and helps catalyze the primary light-induced photochemical processes of PSII. PSII is a light-driven water:plastoquinone oxidoreductase, using light energy to abstract electrons from H(2)O, generating O(2) and a proton gradient subsequently used for ATP formation. This Liriodendron tulipifera (Tuliptree) protein is Photosystem II CP43 reaction center protein.